A 393-amino-acid chain; its full sequence is Elongation factor Tu (393 aa).

The region spanning 10 to 203 is the tr-type G domain; that stretch reads KPHVNIGTIG…AVDSYIPEPV (194 aa). Positions 19 to 26 are G1; it reads GHVDHGKT. 19-26 lines the GTP pocket; the sequence is GHVDHGKT. Thr26 serves as a coordination point for Mg(2+). Positions 60–64 are G2; sequence GITIS. The G3 stretch occupies residues 81 to 84; the sequence is DCPG. GTP contacts are provided by residues 81-85 and 136-139; these read DCPGH and NKVD. Residues 136 to 139 form a G4 region; that stretch reads NKVD. The tract at residues 173-175 is G5; that stretch reads SAL.

Belongs to the TRAFAC class translation factor GTPase superfamily. Classic translation factor GTPase family. EF-Tu/EF-1A subfamily. As to quaternary structure, monomer.

It is found in the cytoplasm. The catalysed reaction is GTP + H2O = GDP + phosphate + H(+). Functionally, GTP hydrolase that promotes the GTP-dependent binding of aminoacyl-tRNA to the A-site of ribosomes during protein biosynthesis. In Prosthecochloris aestuarii (strain DSM 271 / SK 413), this protein is Elongation factor Tu.